A 195-amino-acid chain; its full sequence is CASP-like protein 1B2 (195 aa).

The Cytoplasmic segment spans residues 1–25 (MDLEKGKKPSEQAAACRIMQVKDKL). Residues 26–46 (ITLQPVVRACVFLATAVAAVI) traverse the membrane as a helical segment. Residues 47–78 (MGLNKQSYTTVVAIVGTRPVTQTFTAKFKDTP) are Extracellular-facing. The helical transmembrane segment at 79-99 (AFVFFVIANAIASGYNLMVLV) threads the bilayer. Topologically, residues 100 to 114 (TRRILQRRAQSLSVH) are cytoplasmic. Residues 115–135 (LLDMVILTLLATGSATAASMA) form a helical membrane-spanning segment. At 136 to 160 (QLGKNGNLHARWNPICDKFGSFCNH) the chain is on the extracellular side. The chain crosses the membrane as a helical span at residues 161–181 (GGIALVSSFIGVALMLALNLL). The Cytoplasmic segment spans residues 182–195 (SAAANSPRSNVTGQ).

It belongs to the Casparian strip membrane proteins (CASP) family. As to quaternary structure, homodimer and heterodimers.

The protein localises to the cell membrane. This chain is CASP-like protein 1B2, found in Oryza sativa subsp. indica (Rice).